The chain runs to 133 residues: Small ribosomal subunit protein uS11 (133 aa).

It belongs to the universal ribosomal protein uS11 family. Part of the 30S ribosomal subunit. Interacts with proteins S7 and S18. Binds to IF-3.

Functionally, located on the platform of the 30S subunit, it bridges several disparate RNA helices of the 16S rRNA. Forms part of the Shine-Dalgarno cleft in the 70S ribosome. The polypeptide is Small ribosomal subunit protein uS11 (Ralstonia nicotianae (strain ATCC BAA-1114 / GMI1000) (Ralstonia solanacearum)).